The following is a 445-amino-acid chain: Polyadenylate-binding protein RBP47A (445 aa).

The span at 1-12 (MQTPNNNGSTDS) shows a compositional bias: polar residues. Disordered stretches follow at residues 1–45 (MQTP…WQQQ) and 93–117 (AAYQ…GGDD). The span at 22–35 (TPPPPLQQSTPPPQ) shows a compositional bias: pro residues. Composition is skewed to low complexity over residues 36-45 (QQQQQQWQQQ) and 93-108 (AAYQ…SQQQ). 3 RRM domains span residues 119–199 (KTLW…WASF), 213–292 (LSIF…IATP), and 327–399 (STIF…WGRS).

The protein belongs to the polyadenylate-binding RBP47 family. In terms of assembly, interacts with the poly(A) tail of mRNA in nucleus. As to expression, expressed in leaves, stems, flowers, and seedlings.

It is found in the nucleus. The protein localises to the cytoplasmic granule. Its function is as follows. Heterogeneous nuclear ribonucleoprotein (hnRNP)-protein binding the poly(A) tail of mRNA and probably involved in some steps of pre-mRNA maturation. This chain is Polyadenylate-binding protein RBP47A (RBP47A), found in Arabidopsis thaliana (Mouse-ear cress).